Here is a 381-residue protein sequence, read N- to C-terminus: Acetylornithine deacetylase (381 aa).

Residue H79 coordinates Zn(2+). D81 is an active-site residue. Residue D111 coordinates Zn(2+). E143 is an active-site residue. Zn(2+) contacts are provided by E144, E168, and H354.

It belongs to the peptidase M20A family. ArgE subfamily. Homodimer. Requires Zn(2+) as cofactor. It depends on Co(2+) as a cofactor. The cofactor is glutathione.

The protein localises to the cytoplasm. The catalysed reaction is N(2)-acetyl-L-ornithine + H2O = L-ornithine + acetate. Its pathway is amino-acid biosynthesis; L-arginine biosynthesis; L-ornithine from N(2)-acetyl-L-ornithine (linear): step 1/1. Catalyzes the hydrolysis of the amide bond of N(2)-acetylated L-amino acids. Cleaves the acetyl group from N-acetyl-L-ornithine to form L-ornithine, an intermediate in L-arginine biosynthesis pathway, and a branchpoint in the synthesis of polyamines. The sequence is that of Acetylornithine deacetylase from Buchnera aphidicola subsp. Acyrthosiphon pisum (strain APS) (Acyrthosiphon pisum symbiotic bacterium).